A 939-amino-acid chain; its full sequence is Isoleucine--tRNA ligase (939 aa).

The 'HIGH' region motif lies at 58–68 (PYANGDIHIGH). L-isoleucyl-5'-AMP is bound at residue Glu-574. Residues 615–619 (KMSKS) carry the 'KMSKS' region motif. Lys-618 is an ATP binding site. Residues Cys-902, Cys-905, Cys-922, and Cys-925 each coordinate Zn(2+).

This sequence belongs to the class-I aminoacyl-tRNA synthetase family. IleS type 1 subfamily. Monomer. It depends on Zn(2+) as a cofactor.

The protein localises to the cytoplasm. It carries out the reaction tRNA(Ile) + L-isoleucine + ATP = L-isoleucyl-tRNA(Ile) + AMP + diphosphate. Catalyzes the attachment of isoleucine to tRNA(Ile). As IleRS can inadvertently accommodate and process structurally similar amino acids such as valine, to avoid such errors it has two additional distinct tRNA(Ile)-dependent editing activities. One activity is designated as 'pretransfer' editing and involves the hydrolysis of activated Val-AMP. The other activity is designated 'posttransfer' editing and involves deacylation of mischarged Val-tRNA(Ile). The polypeptide is Isoleucine--tRNA ligase (Aromatoleum aromaticum (strain DSM 19018 / LMG 30748 / EbN1) (Azoarcus sp. (strain EbN1))).